Consider the following 118-residue polypeptide: Small ribosomal subunit protein uS13 (118 aa).

The interval 94-118 is disordered; that stretch reads GLPLRGQRTKTNARTRKGPRKPIRK.

It belongs to the universal ribosomal protein uS13 family. Part of the 30S ribosomal subunit. Forms a loose heterodimer with protein S19. Forms two bridges to the 50S subunit in the 70S ribosome.

Located at the top of the head of the 30S subunit, it contacts several helices of the 16S rRNA. In the 70S ribosome it contacts the 23S rRNA (bridge B1a) and protein L5 of the 50S subunit (bridge B1b), connecting the 2 subunits; these bridges are implicated in subunit movement. Contacts the tRNAs in the A and P-sites. The chain is Small ribosomal subunit protein uS13 from Alcanivorax borkumensis (strain ATCC 700651 / DSM 11573 / NCIMB 13689 / SK2).